We begin with the raw amino-acid sequence, 78 residues long: Probable [Fe-S]-dependent transcriptional repressor (78 aa).

Residues cysteine 56, cysteine 61, cysteine 64, and cysteine 70 each coordinate iron-sulfur cluster.

This sequence belongs to the FeoC family.

In terms of biological role, may function as a transcriptional regulator that controls feoABC expression. The sequence is that of Probable [Fe-S]-dependent transcriptional repressor from Enterobacter sp. (strain 638).